A 209-amino-acid chain; its full sequence is Outer-membrane lipoprotein carrier protein (209 aa).

Residues Met-1 to Ala-21 form the signal peptide.

Belongs to the LolA family. Monomer.

The protein localises to the periplasm. Its function is as follows. Participates in the translocation of lipoproteins from the inner membrane to the outer membrane. Only forms a complex with a lipoprotein if the residue after the N-terminal Cys is not an aspartate (The Asp acts as a targeting signal to indicate that the lipoprotein should stay in the inner membrane). The polypeptide is Outer-membrane lipoprotein carrier protein (Hahella chejuensis (strain KCTC 2396)).